A 126-amino-acid polypeptide reads, in one-letter code: Protein ApaG (126 aa).

Residues 2–126 (SDPRYQVDVS…FRLAVPGALH (125 aa)) enclose the ApaG domain.

The chain is Protein ApaG from Pseudomonas fluorescens (strain ATCC BAA-477 / NRRL B-23932 / Pf-5).